We begin with the raw amino-acid sequence, 799 residues long: Protein-lysine N-methyltransferase SMYD4 (799 aa).

112-114 (RSA) is an S-adenosyl-L-methionine binding site. The 338-residue stretch at 233–570 (LSVSLCTHPL…KGQEILHCYG (338 aa)) folds into the SET domain. Zn(2+)-binding residues include Cys296, Cys299, Cys309, Cys312, Cys318, Cys322, His331, and Cys335. Residues 296–335 (CHRCLKHTLATVPCGSCSYAKYCSQECMQQAWDLYHSTEC) form an MYND-type zinc finger. S-adenosyl-L-methionine contacts are provided by residues 535–536 (NH), Tyr569, and Phe591.

This sequence belongs to the class V-like SAM-binding methyltransferase superfamily. In terms of assembly, interacts (via MYND-type zinc finger) with HDAC1.

Its subcellular location is the nucleus. The protein localises to the cytoplasm. The enzyme catalyses L-lysyl-[protein] + S-adenosyl-L-methionine = N(6)-methyl-L-lysyl-[protein] + S-adenosyl-L-homocysteine + H(+). Its function is as follows. Protein-lysine N-methyltransferase. Monomethylates PRMT5, modulating its transcriptional activity. May also act as a histone methyltransferase. Plays a critical role in cardiac development. Acts as a key epigenetic regulator of gene expression during cardiac development via its dual activities as a methyltransferase and negative regulator of HDAC1. This is Protein-lysine N-methyltransferase SMYD4 (Smyd4) from Mus musculus (Mouse).